A 515-amino-acid polypeptide reads, in one-letter code: Bifunctional purine biosynthesis protein PurH (515 aa).

The region spanning 1–145 (MTKRALISVS…KNHASVTVVV (145 aa)) is the MGS-like domain.

It belongs to the PurH family.

The catalysed reaction is (6R)-10-formyltetrahydrofolate + 5-amino-1-(5-phospho-beta-D-ribosyl)imidazole-4-carboxamide = 5-formamido-1-(5-phospho-D-ribosyl)imidazole-4-carboxamide + (6S)-5,6,7,8-tetrahydrofolate. The enzyme catalyses IMP + H2O = 5-formamido-1-(5-phospho-D-ribosyl)imidazole-4-carboxamide. The protein operates within purine metabolism; IMP biosynthesis via de novo pathway; 5-formamido-1-(5-phospho-D-ribosyl)imidazole-4-carboxamide from 5-amino-1-(5-phospho-D-ribosyl)imidazole-4-carboxamide (10-formyl THF route): step 1/1. It functions in the pathway purine metabolism; IMP biosynthesis via de novo pathway; IMP from 5-formamido-1-(5-phospho-D-ribosyl)imidazole-4-carboxamide: step 1/1. The protein is Bifunctional purine biosynthesis protein PurH of Streptococcus pyogenes serotype M12 (strain MGAS2096).